The sequence spans 115 residues: Autophagy-related protein 8i (115 aa).

Gly-115 carries the Phosphatidylethanolamine amidated glycine lipid modification.

The protein belongs to the ATG8 family. Interacts with ATG4. Interacts with NBR1. In terms of processing, gly-115 forms then a thioester bond with the 'Cys-558' of ATG7 (E1-like activating enzyme) before being transferred to the 'Cys-258' of ATG3 (the specific E2 conjugating enzyme), in order to be finally amidated with phosphatidylethanolamine. This lipid modification anchors ATG8 to autophagosomes. Constitutively expressed.

The protein resides in the cytoplasmic vesicle. It localises to the autophagosome membrane. The protein localises to the vacuole membrane. Its subcellular location is the cytoplasm. It is found in the cytoskeleton. Functionally, ubiquitin-like modifier involved in autophagosomes formation. May mediate the delivery of the autophagosomes to the vacuole via the microtubule cytoskeleton. The protein is Autophagy-related protein 8i (ATG8I) of Arabidopsis thaliana (Mouse-ear cress).